Here is a 99-residue protein sequence, read N- to C-terminus: Nucleoid-associated protein SZO_16661 (99 aa).

Belongs to the YbaB/EbfC family. As to quaternary structure, homodimer.

The protein resides in the cytoplasm. The protein localises to the nucleoid. Functionally, binds to DNA and alters its conformation. May be involved in regulation of gene expression, nucleoid organization and DNA protection. In Streptococcus equi subsp. zooepidemicus (strain H70), this protein is Nucleoid-associated protein SZO_16661.